A 420-amino-acid polypeptide reads, in one-letter code: Glutamate-1-semialdehyde 2,1-aminomutase (420 aa).

At Lys-259 the chain carries N6-(pyridoxal phosphate)lysine.

The protein belongs to the class-III pyridoxal-phosphate-dependent aminotransferase family. HemL subfamily. As to quaternary structure, homodimer. The cofactor is pyridoxal 5'-phosphate.

The protein localises to the cytoplasm. The enzyme catalyses (S)-4-amino-5-oxopentanoate = 5-aminolevulinate. Its pathway is porphyrin-containing compound metabolism; protoporphyrin-IX biosynthesis; 5-aminolevulinate from L-glutamyl-tRNA(Glu): step 2/2. This is Glutamate-1-semialdehyde 2,1-aminomutase from Nautilia profundicola (strain ATCC BAA-1463 / DSM 18972 / AmH).